Reading from the N-terminus, the 780-residue chain is Calpain clp-1 (780 aa).

Residues 269-282 (DVDPFVRPGPDPDR) are compositionally biased toward basic and acidic residues. Residues 269–300 (DVDPFVRPGPDPDRGGGGSGPSPISPRPTTEP) are disordered. The Calpain catalytic domain maps to 316 to 611 (LFEDPQFLAN…FEKMEICNLG (296 aa)). Residues Cys371, His527, and Asn551 contribute to the active site.

Belongs to the peptidase C2 family. Expressed in muscle and neuronal tissues. Expressed in the ventral and dorsal nerve cord, intestinal and hypodermal tissues.

It localises to the cytoplasm. It is found in the myofibril. The protein resides in the sarcomere. The protein localises to the m line. Functionally, calcium-regulated non-lysosomal thiol-protease which catalyzes limited proteolysis of substrates. Required for assembly and maintenance of integrin attachment complexes which are essential for maintenance of adult muscle. Proteolytic activity is activated in response to increased intracellular Ca(2+) levels during cell degeneration and promotes necrotic cell death. This is Calpain clp-1 from Caenorhabditis elegans.